The following is a 308-amino-acid chain: Maspardin (308 aa).

The 73-residue stretch at 87–159 (FCDGFRKLLD…NSFWLMPAFM (73 aa)) folds into the AB hydrolase-1 domain.

It belongs to the AB hydrolase superfamily. As to quaternary structure, interacts with CD4. Interacts with ALDH16A1.

The protein localises to the cytoplasm. May play a role as a negative regulatory factor in CD4-dependent T-cell activation. This chain is Maspardin (SPG21), found in Macaca fascicularis (Crab-eating macaque).